The following is a 130-amino-acid chain: Methylglyoxal synthase (130 aa).

The MGS-like domain occupies methionine 1–alanine 130. Substrate is bound by residues histidine 11, lysine 15, threonine 37–threonine 40, and serine 57–glycine 58. Residue aspartate 63 is the Proton donor/acceptor of the active site. Histidine 90 lines the substrate pocket.

It belongs to the methylglyoxal synthase family.

The catalysed reaction is dihydroxyacetone phosphate = methylglyoxal + phosphate. In terms of biological role, catalyzes the formation of methylglyoxal from dihydroxyacetone phosphate. This is Methylglyoxal synthase from Burkholderia mallei (strain NCTC 10247).